The following is a 1807-amino-acid chain: Nucleoporin nup189 (1807 aa).

Residues 1–118 (MFGQNNSSGF…SGGGLFGSNT (118 aa)) are disordered. 2 GLFG repeats span residues 26 to 29 (GLFG) and 66 to 69 (GLFG). The span at 29-61 (GSNSNTPGNTLFGSQNTSTTGFGQNTTQPLFGS) shows a compositional bias: polar residues. Positions 62 to 77 (NTNGGLFGNRNNTTTT) are enriched in low complexity. Over residues 78 to 90 (GGTGFGMSSGTGM) the composition is skewed to gly residues. The segment covering 93–108 (QSNTPAFGGTNNATNP) has biased composition (polar residues). GLFG repeat units follow at residues 112 to 115 (GLFG), 152 to 155 (GLFG), 177 to 180 (GLFG), 308 to 311 (GLFG), 335 to 338 (GLFG), 350 to 353 (GLFG), 381 to 384 (GLFG), 399 to 402 (GLFG), 435 to 438 (GLFG), and 521 to 524 (GLFG). The span at 565 to 584 (PGTGLFGSTQTNNATSNTGT) shows a compositional bias: polar residues. The tract at residues 565–685 (PGTGLFGSTQ…SSTTSQVAPT (121 aa)) is disordered. GLFG repeat units follow at residues 585–588 (GLFG), 611–614 (GLFG), 627–630 (GLFG), and 646–649 (GLFG). A compositionally biased stretch (low complexity) spans 588–600 (GSNNANTTNTGGS). The span at 603-644 (NKPSTTTGGLFGNTTAQQPSTTTSGLFGASNTNNQAQTSNFG) shows a compositional bias: polar residues. Over residues 653–663 (AGQQQQPLQAS) the composition is skewed to low complexity. Positions 664-685 (IDQNPYGNNPLFSSTTSQVAPT) are enriched in polar residues. The residue at position 724 (serine 724) is a Phosphoserine. The interval 785 to 814 (QNGVKNGNDAKSDSKVQEKAPQNEADGSLK) is disordered. The span at 792–802 (NDAKSDSKVQE) shows a compositional bias: basic and acidic residues. A Peptidase S59 domain is found at 822–963 (SDDYWMKPSI…GKWIFKVQHF (142 aa)). The segment at 974–1020 (EENDMSSTSNEAGNLKKYDQPNLKVSGKNDSFVTHHTPGAFPNDSKN) is disordered. Phosphoserine is present on serine 1051. Residues 1082 to 1104 (KENNVPLSEDDLSNSSESSNESV) are disordered. Residues 1094 to 1104 (SNSSESSNESV) show a composition bias toward low complexity.

Belongs to the nucleoporin GLFG family. As to quaternary structure, interacts (via G-L-F-G repeats) with rpn15/dss1. Interacts with raf1. Interacts with ned1. In terms of processing, nup189 is autocatalytically cleaved in nup98 and nup96.

It localises to the nucleus. It is found in the nuclear pore complex. Functionally, functions as a component of the nuclear pore complex (NPC). NPC components, collectively referred to as nucleoporins (NUPs), can play the role of both NPC structural components and of docking or interaction partners for transiently associated nuclear transport factors. Active directional transport is assured by both, a Phe-Gly (FG) repeat affinity gradient for these transport factors across the NPC and a transport cofactor concentration gradient across the nuclear envelope. Nup189 is autocatalytically cleaved in vivo in 2 polypeptides which assume different functions in the NPC. Nup98 as one of the FG repeat nucleoporins participates in karyopherin interactions and contains part of the autocatalytic cleavage activity. Nup96 as part of the NUP84 complex is involved in nuclear poly(A)+ RNA and tRNA export. This chain is Nucleoporin nup189 (nup189), found in Schizosaccharomyces pombe (strain 972 / ATCC 24843) (Fission yeast).